The chain runs to 98 residues: NADH-ubiquinone oxidoreductase chain 4L (98 aa).

A run of 3 helical transmembrane segments spans residues 2–22 (PSTF…TLMF), 26–46 (LMST…MTSV), and 58–79 (PIPI…ALLV).

It belongs to the complex I subunit 4L family. In terms of assembly, core subunit of respiratory chain NADH dehydrogenase (Complex I) which is composed of 45 different subunits.

The protein resides in the mitochondrion inner membrane. It carries out the reaction a ubiquinone + NADH + 5 H(+)(in) = a ubiquinol + NAD(+) + 4 H(+)(out). In terms of biological role, core subunit of the mitochondrial membrane respiratory chain NADH dehydrogenase (Complex I) which catalyzes electron transfer from NADH through the respiratory chain, using ubiquinone as an electron acceptor. Part of the enzyme membrane arm which is embedded in the lipid bilayer and involved in proton translocation. In Mus musculus (Mouse), this protein is NADH-ubiquinone oxidoreductase chain 4L.